Consider the following 96-residue polypeptide: Co-chaperonin GroES (96 aa).

It belongs to the GroES chaperonin family. In terms of assembly, heptamer of 7 subunits arranged in a ring. Interacts with the chaperonin GroEL.

The protein resides in the cytoplasm. Together with the chaperonin GroEL, plays an essential role in assisting protein folding. The GroEL-GroES system forms a nano-cage that allows encapsulation of the non-native substrate proteins and provides a physical environment optimized to promote and accelerate protein folding. GroES binds to the apical surface of the GroEL ring, thereby capping the opening of the GroEL channel. The chain is Co-chaperonin GroES from Alcanivorax borkumensis (strain ATCC 700651 / DSM 11573 / NCIMB 13689 / SK2).